Consider the following 461-residue polypeptide: Phenolic glucoside malonyltransferase 1 (461 aa).

H167 acts as the Proton acceptor in catalysis. The HXXXD motif signature appears at 167-171 (HAAQD). Residue 281–282 (ST) coordinates malonyl-CoA. D400 functions as the Proton acceptor in the catalytic mechanism. Residues 400–404 (DFGWG) carry the DFGWG motif motif.

It belongs to the plant acyltransferase family. Phenolic glucoside malonyltransferase subfamily. Expressed in all tissues. Most highly expressed in the abdomen and especially in the gut.

The enzyme catalyses a flavonol 3-O-beta-D-glucoside + malonyl-CoA = a flavonol 3-O-(6-O-malonyl-beta-D-glucoside) + CoA. It catalyses the reaction kaempferol 3-O-beta-D-glucoside + malonyl-CoA = kaempferol 3-O-(6-O-malonyl-beta-D-glucoside) + CoA. It carries out the reaction quercetin 3-O-beta-D-glucoside + malonyl-CoA = quercetin 3-O-(6-O-malonyl-beta-D-glucoside) + CoA. The catalysed reaction is a flavonol 7-O-beta-D-glucoside + malonyl-CoA = a flavonol 7-O-(6-O-malonyl-beta-D-glucoside) + CoA. The enzyme catalyses (2S)-naringenin 7-O-beta-D-glucoside + malonyl-CoA = (2S)-naringenin 7-O-(6-O-malonyl-beta-D-glucoside) + CoA. It catalyses the reaction kaempferol 7-O-beta-D-glucoside + malonyl-CoA = kaempferol 7-O-(6-O-malonyl-beta-D-glucoside) + CoA. It carries out the reaction apigenin 7-O-beta-D-glucoside + malonyl-CoA = apigenin 7-O-(6-O-malonyl-beta-D-glucoside) + CoA. The catalysed reaction is rhaponticin + malonyl-CoA = 6-O-malonyl-rhaponticin + CoA. Functionally, phenolic glucoside malonyltransferase that neutralizes phenolic glycosides in host plants. Catalyzes the transfer of a malonyl group from malonyl-CoA to the phenolic glycosides, leading to their detoxification. Phenolic glycosides, which are among the most abundant plant secondary metabolites, act as plant defense compounds: they strongly affect growth, development and behavior of insect herbivores. Has malonyltransferase activity against flavonoids kaempferol 3-O-glucoside, kaempferol 7-O-glucoside, isoquercetin (quercetin 3-O-beta-D-glucopyranoside), apigetrin (apigenin 7-O-beta-D-glucoside) and prunin (naringenin 7-O-beta-D-glucoside). Also has activity toward non-flavonoid rhaponticin, but with lower efficiency. The chain is Phenolic glucoside malonyltransferase 1 from Bemisia tabaci (Sweetpotato whitefly).